The following is a 631-amino-acid chain: Phosphomethylpyrimidine synthase (631 aa).

Substrate-binding positions include N239, M268, Y297, H333, 353–355, 394–397, and E433; these read SRG and DGLR. H437 contributes to the Zn(2+) binding site. Position 460 (Y460) interacts with substrate. H501 contacts Zn(2+). [4Fe-4S] cluster-binding residues include C581, C584, and C589.

Belongs to the ThiC family. In terms of assembly, homodimer. Requires [4Fe-4S] cluster as cofactor.

The catalysed reaction is 5-amino-1-(5-phospho-beta-D-ribosyl)imidazole + S-adenosyl-L-methionine = 4-amino-2-methyl-5-(phosphooxymethyl)pyrimidine + CO + 5'-deoxyadenosine + formate + L-methionine + 3 H(+). Its pathway is cofactor biosynthesis; thiamine diphosphate biosynthesis. Its function is as follows. Catalyzes the synthesis of the hydroxymethylpyrimidine phosphate (HMP-P) moiety of thiamine from aminoimidazole ribotide (AIR) in a radical S-adenosyl-L-methionine (SAM)-dependent reaction. This Escherichia coli (strain SMS-3-5 / SECEC) protein is Phosphomethylpyrimidine synthase.